A 202-amino-acid polypeptide reads, in one-letter code: Small ribosomal subunit protein uS4 (202 aa).

The segment at 18–42 (LPGLTRKAAKRSYPPGQHGQARRKR) is disordered. One can recognise an S4 RNA-binding domain in the interval 90–152 (NRLDNVCFRL…KPSKKLAETN (63 aa)).

It belongs to the universal ribosomal protein uS4 family. As to quaternary structure, part of the 30S ribosomal subunit. Contacts protein S5. The interaction surface between S4 and S5 is involved in control of translational fidelity.

One of the primary rRNA binding proteins, it binds directly to 16S rRNA where it nucleates assembly of the body of the 30S subunit. Its function is as follows. With S5 and S12 plays an important role in translational accuracy. The sequence is that of Small ribosomal subunit protein uS4 from Synechococcus sp. (strain RCC307).